The sequence spans 359 residues: DNA-directed RNA polymerase RPB3-11 homolog (359 aa).

This sequence in the N-terminal section; belongs to the archaeal RpoD/eukaryotic RPB3 RNA polymerase subunit family. The protein in the C-terminal section; belongs to the archaeal RpoL/eukaryotic RPB11/RPC19 RNA polymerase subunit family. Part of the viral DNA-directed RNA polymerase that consists of 8 polII-like subunits (RPB1, RPB2, RPB3, RPB5, RPB6, RPB7, RPB9, RPB10), a capping enzyme and a termination factor.

The protein resides in the host cytoplasm. It is found in the virion. Its function is as follows. Component of the DNA-directed RNA polymerase (RNAP) that catalyzes the transcription in the cytoplasm of viral DNA into RNA using the four ribonucleoside triphosphates as substrates. The chain is DNA-directed RNA polymerase RPB3-11 homolog from Ornithodoros (relapsing fever ticks).